Reading from the N-terminus, the 100-residue chain is Large ribosomal subunit protein uL23 (100 aa).

It belongs to the universal ribosomal protein uL23 family. In terms of assembly, part of the 50S ribosomal subunit. Contacts protein L29, and trigger factor when it is bound to the ribosome.

One of the early assembly proteins it binds 23S rRNA. One of the proteins that surrounds the polypeptide exit tunnel on the outside of the ribosome. Forms the main docking site for trigger factor binding to the ribosome. This is Large ribosomal subunit protein uL23 from Novosphingobium aromaticivorans (strain ATCC 700278 / DSM 12444 / CCUG 56034 / CIP 105152 / NBRC 16084 / F199).